The primary structure comprises 61 residues: MRCVPVFIILLLLSPSAPSVDAHPKTKDDVPLASFHDDAKRTLQRLWQNTWCCRDHLRCCG.

The first 22 residues, 1 to 22 (MRCVPVFIILLLLSPSAPSVDA), serve as a signal peptide directing secretion. A propeptide spanning residues 23–44 (HPKTKDDVPLASFHDDAKRTLQ) is cleaved from the precursor. Residue cysteine 60 is modified to Cysteine amide.

This sequence belongs to the conotoxin T superfamily. In terms of processing, contains 2 disulfide bonds that can be either 'C1-C3, C2-C4' or 'C1-C4, C2-C3', since these disulfide connectivities have been observed for conotoxins with cysteine framework V (for examples, see AC P0DQQ7 and AC P81755). Expressed by the venom duct.

The protein resides in the secreted. Functionally, has the ability to interact with the G-protein coupled somatostatin type 3 receptor (SSTR3). The ability was measured in competition binding experiments and the constant of inhibition (Ki) has been evaluated to be 3.5 uM. The chain is Conotoxin LiC32 from Conus lividus (Livid cone).